Consider the following 26-residue polypeptide: Neprilysin (26 aa).

This sequence belongs to the peptidase M13 family. It depends on Zn(2+) as a cofactor.

Its subcellular location is the cell membrane. It carries out the reaction Preferential cleavage of polypeptides between hydrophobic residues, particularly with Phe or Tyr at P1'.. It catalyses the reaction substance P + H2O = substance P(1-9) + L-Leu-L-Met-NH2. The enzyme catalyses substance P + H2O = substance P(1-7) + L-Phe-Gly-L-Leu-L-Met-NH2. The catalysed reaction is neurotensin + H2O = neurotensin(1-11) + L-isoleucyl-L-leucine. It carries out the reaction neurotensin + H2O = neurotensin(1-10) + L-tyrosyl-L-isoleucyl-L-leucine. Functionally, thermolysin-like specificity, but is almost confined on acting on polypeptides of up to 30 amino acids. Biologically important in the destruction of opioid peptides such as Met- and Leu-enkephalins by cleavage of a Gly-Phe bond. Catalyzes cleavage of bradykinin, substance P and neurotensin peptides. Able to cleave angiotensin-1, angiotensin-2 and angiotensin 1-9. Involved in the degradation of atrial natriuretic factor (ANF) and brain natriuretic factor (BNP(1-32)). Displays UV-inducible elastase activity toward skin preelastic and elastic fibers. The polypeptide is Neprilysin (MME) (Sus scrofa (Pig)).